The sequence spans 243 residues: Pyridoxine 5'-phosphate synthase (243 aa).

A 3-amino-2-oxopropyl phosphate-binding site is contributed by Asn-9. 11–12 (DH) contributes to the 1-deoxy-D-xylulose 5-phosphate binding site. Position 20 (Arg-20) interacts with 3-amino-2-oxopropyl phosphate. The active-site Proton acceptor is His-45. 1-deoxy-D-xylulose 5-phosphate-binding residues include Arg-47 and His-52. The active-site Proton acceptor is Glu-72. Thr-102 contributes to the 1-deoxy-D-xylulose 5-phosphate binding site. The active-site Proton donor is the His-193. Residues Gly-194 and 215 to 216 (GH) each bind 3-amino-2-oxopropyl phosphate.

This sequence belongs to the PNP synthase family. Homooctamer; tetramer of dimers.

The protein localises to the cytoplasm. It carries out the reaction 3-amino-2-oxopropyl phosphate + 1-deoxy-D-xylulose 5-phosphate = pyridoxine 5'-phosphate + phosphate + 2 H2O + H(+). The protein operates within cofactor biosynthesis; pyridoxine 5'-phosphate biosynthesis; pyridoxine 5'-phosphate from D-erythrose 4-phosphate: step 5/5. Its function is as follows. Catalyzes the complicated ring closure reaction between the two acyclic compounds 1-deoxy-D-xylulose-5-phosphate (DXP) and 3-amino-2-oxopropyl phosphate (1-amino-acetone-3-phosphate or AAP) to form pyridoxine 5'-phosphate (PNP) and inorganic phosphate. This chain is Pyridoxine 5'-phosphate synthase, found in Vibrio cholerae serotype O1 (strain ATCC 39315 / El Tor Inaba N16961).